A 379-amino-acid polypeptide reads, in one-letter code: Dual-specificity RNA methyltransferase RlmN (379 aa).

The active-site Proton acceptor is the glutamate 90. Residues 96-348 (EPSRGTLCVS…TTVRKTRGDD (253 aa)) form the Radical SAM core domain. The cysteines at positions 103 and 353 are disulfide-linked. Positions 110, 114, and 117 each coordinate [4Fe-4S] cluster. S-adenosyl-L-methionine is bound by residues 179–180 (GE), serine 211, 233–235 (SLH), and asparagine 310. Catalysis depends on cysteine 353, which acts as the S-methylcysteine intermediate.

This sequence belongs to the radical SAM superfamily. RlmN family. [4Fe-4S] cluster serves as cofactor.

Its subcellular location is the cytoplasm. It carries out the reaction adenosine(2503) in 23S rRNA + 2 reduced [2Fe-2S]-[ferredoxin] + 2 S-adenosyl-L-methionine = 2-methyladenosine(2503) in 23S rRNA + 5'-deoxyadenosine + L-methionine + 2 oxidized [2Fe-2S]-[ferredoxin] + S-adenosyl-L-homocysteine. The enzyme catalyses adenosine(37) in tRNA + 2 reduced [2Fe-2S]-[ferredoxin] + 2 S-adenosyl-L-methionine = 2-methyladenosine(37) in tRNA + 5'-deoxyadenosine + L-methionine + 2 oxidized [2Fe-2S]-[ferredoxin] + S-adenosyl-L-homocysteine. In terms of biological role, specifically methylates position 2 of adenine 2503 in 23S rRNA and position 2 of adenine 37 in tRNAs. m2A2503 modification seems to play a crucial role in the proofreading step occurring at the peptidyl transferase center and thus would serve to optimize ribosomal fidelity. The chain is Dual-specificity RNA methyltransferase RlmN from Nitrosomonas europaea (strain ATCC 19718 / CIP 103999 / KCTC 2705 / NBRC 14298).